The sequence spans 440 residues: D-serine dehydratase (440 aa).

The residue at position 116 (lysine 116) is an N6-(pyridoxal phosphate)lysine.

This sequence belongs to the serine/threonine dehydratase family. DsdA subfamily. Monomer. It depends on pyridoxal 5'-phosphate as a cofactor.

It carries out the reaction D-serine = pyruvate + NH4(+). The chain is D-serine dehydratase from Salmonella choleraesuis (strain SC-B67).